We begin with the raw amino-acid sequence, 553 residues long: Dihydroxy-acid dehydratase (553 aa).

D78 is a Mg(2+) binding site. A [2Fe-2S] cluster-binding site is contributed by C119. D120 and K121 together coordinate Mg(2+). K121 bears the N6-carboxylysine mark. C192 is a [2Fe-2S] cluster binding site. E442 lines the Mg(2+) pocket. Residue S468 is the Proton acceptor of the active site.

It belongs to the IlvD/Edd family. In terms of assembly, homodimer. Requires [2Fe-2S] cluster as cofactor. The cofactor is Mg(2+).

The catalysed reaction is (2R)-2,3-dihydroxy-3-methylbutanoate = 3-methyl-2-oxobutanoate + H2O. The enzyme catalyses (2R,3R)-2,3-dihydroxy-3-methylpentanoate = (S)-3-methyl-2-oxopentanoate + H2O. It participates in amino-acid biosynthesis; L-isoleucine biosynthesis; L-isoleucine from 2-oxobutanoate: step 3/4. Its pathway is amino-acid biosynthesis; L-valine biosynthesis; L-valine from pyruvate: step 3/4. Its function is as follows. Functions in the biosynthesis of branched-chain amino acids. Catalyzes the dehydration of (2R,3R)-2,3-dihydroxy-3-methylpentanoate (2,3-dihydroxy-3-methylvalerate) into 2-oxo-3-methylpentanoate (2-oxo-3-methylvalerate) and of (2R)-2,3-dihydroxy-3-methylbutanoate (2,3-dihydroxyisovalerate) into 2-oxo-3-methylbutanoate (2-oxoisovalerate), the penultimate precursor to L-isoleucine and L-valine, respectively. The chain is Dihydroxy-acid dehydratase from Campylobacter hominis (strain ATCC BAA-381 / DSM 21671 / CCUG 45161 / LMG 19568 / NCTC 13146 / CH001A).